We begin with the raw amino-acid sequence, 478 residues long: Alpha-1,3-mannosyl-glycoprotein 4-beta-N-acetylglucosaminyltransferase C (478 aa).

At 1–25 (MLKFYQMKYIFQILDKMRCLRKRST) the chain is on the cytoplasmic side. The chain crosses the membrane as a helical; Signal-anchor for type II membrane protein span at residues 26 to 43 (VSFLGVLVVFLLFMNLYI). Residues 44-478 (EDSYVLEGDK…IIRSISIWTS (435 aa)) are Lumenal-facing. N-linked (GlcNAc...) asparagine glycans are attached at residues asparagine 84 and asparagine 215.

Belongs to the glycosyltransferase 54 family. A divalent metal cation is required as a cofactor.

The protein resides in the golgi apparatus membrane. It catalyses the reaction N(4)-{beta-D-GlcNAc-(1-&gt;2)-alpha-D-Man-(1-&gt;3)-[beta-D-GlcNAc-(1-&gt;2)-alpha-D-Man-(1-&gt;6)]-beta-D-Man-(1-&gt;4)-beta-D-GlcNAc-(1-&gt;4)-beta-D-GlcNAc}-L-asparaginyl-[protein] + UDP-N-acetyl-alpha-D-glucosamine = N(4)-{beta-D-GlcNAc-(1-&gt;2)-[beta-D-GlcNAc-(1-&gt;4)]-alpha-D-Man-(1-&gt;3)-[beta-D-GlcNAc-(1-&gt;2)-alpha-D-Man-(1-&gt;6)]-beta-D-Man-(1-&gt;4)-beta-D-GlcNAc-(1-&gt;4)-beta-D-GlcNAc}-L-asparaginyl-[protein] + UDP + H(+). It functions in the pathway protein modification; protein glycosylation. Glycosyltransferase that participates in the transfer of N-acetylglucosamine (GlcNAc) to the core mannose residues of N-linked glycans. Catalyzes the formation of the GlcNAcbeta1-4 branch on the GlcNAcbeta1-2Manalpha1-3 arm of the core structure of N-linked glycans. Essential for the production of tri- and tetra-antennary N-linked sugar chains. Does not catalyze the transfer of GlcNAc to the Manalpha1-6 arm to form GlcNAcBeta1-4Manalpha1-6 linkage ('GnT-VI' activity). In Mus musculus (Mouse), this protein is Alpha-1,3-mannosyl-glycoprotein 4-beta-N-acetylglucosaminyltransferase C (Mgat4c).